The following is a 491-amino-acid chain: Histamine H1 receptor (491 aa).

The Extracellular portion of the chain corresponds to 1–30; that stretch reads MTCPNSSCVFEDKMCQGNKTAPANDAQLTP. N-linked (GlcNAc...) asparagine glycosylation is found at asparagine 5 and asparagine 18. Residues 31 to 51 form a helical membrane-spanning segment; sequence LVVVLSTISLVTVGLNLLVLY. Residues 52-65 are Cytoplasmic-facing; that stretch reads AVRSERKLHTVGNL. The helical transmembrane segment at 66–90 threads the bilayer; sequence YIVSLSVADLIVGVVVMPMNILYLL. Topologically, residues 91-98 are extracellular; it reads MSRWSLGR. A helical membrane pass occupies residues 99–124; sequence PLCLFWLSMDYVASTASIFSVFILCI. Cysteine 101 and cysteine 181 are joined by a disulfide. Positions 108 and 113 each coordinate histamine. An important for agonist binding region spans residues 108-113; sequence DYVAST. The Cytoplasmic portion of the chain corresponds to 125–145; the sequence is DRYRSVQQPLKYLRYRTKTRA. Phosphothreonine is present on residues threonine 141 and threonine 143. The chain crosses the membrane as a helical span at residues 146-165; the sequence is SITILAAWFLSFLWIIPILG. Residues 166–189 lie on the Extracellular side of the membrane; it reads WRHFQPKTPEPREDKCETDFYNVT. A helical transmembrane segment spans residues 190–212; sequence WFKVMTAIINFYLPTLLMLWFYA. Asparagine 199 serves as a coordination point for histamine. Residues 213–420 are Cytoplasmic-facing; that stretch reads KIYKAVRQHC…MNRERKAAKQ (208 aa). Serine 231 bears the Phosphoserine mark. Disordered regions lie at residues 246 to 297 and 360 to 385; these read QVGA…KEEK and QSFSRTDSDTPAEPAPAKGKSRSESS. Residues 252 to 262 show a composition bias toward basic and acidic residues; the sequence is PGKESPWEVLK. Phosphoserine occurs at positions 384, 400, and 402. A helical transmembrane segment spans residues 421-444; the sequence is LGFIMAAFIICWIPYFIFFMVIAF. Residues 428-432 form an important for agonist binding region; that stretch reads FIICW. Residue tyrosine 435 participates in histamine binding. A disulfide bridge connects residues cysteine 445 and cysteine 448. Residues 445–450 are Extracellular-facing; it reads CESCCN. Residues 451–473 traverse the membrane as a helical segment; the sequence is QHVHMFTIWLGYINSTLNPLIYP. At 474-491 the chain is on the cytoplasmic side; the sequence is LCNENFKKTFKKILHIRS.

This sequence belongs to the G-protein coupled receptor 1 family. In terms of processing, phosphorylation at sites in the second and third cytoplasmic loops independently contribute to agonist-induced receptor down-regulation. In terms of tissue distribution, brain, lung, small intestine, uterus, adrenal medulla and spleen.

The protein resides in the cell membrane. Functionally, G-protein-coupled receptor for histamine, a biogenic amine that functions as an immune modulator and a neurotransmitter. Through the H1 receptor, histamine mediates the contraction of smooth muscles and increases capillary permeability due to contraction of terminal venules. Also mediates neurotransmission in the central nervous system and thereby regulates circadian rhythms, emotional and locomotor activities as well as cognitive functions. This is Histamine H1 receptor from Bos taurus (Bovine).